Reading from the N-terminus, the 311-residue chain is Olfactory receptor 6B1 (311 aa).

Residues 1 to 25 (MELENQTRVTKFILVGFPGSLSMRA) are Extracellular-facing. N-linked (GlcNAc...) asparagine glycosylation occurs at asparagine 5. The helical transmembrane segment at 26–46 (AMFLIFLVAYILTVAENVIII) threads the bilayer. Residues 47 to 54 (LLVLQNRP) lie on the Cytoplasmic side of the membrane. Residues 55-75 (LHKPMYFFLANLSFLETWYIS) form a helical membrane-spanning segment. Over 76 to 99 (VTVPKLLFSFWSVNNSISFTLCMI) the chain is Extracellular. Cysteine 97 and cysteine 189 are joined by a disulfide. The chain crosses the membrane as a helical span at residues 100–120 (QLYFFIALMCTECVLLAAMAY). The Cytoplasmic portion of the chain corresponds to 121 to 139 (DRYVAICRPLHYPTIMSHG). Residues 140–160 (LCFRLALGSWAIGFGISLAKI) traverse the membrane as a helical segment. The Extracellular segment spans residues 161–196 (YFISCLSFCGPNVINHFFCDISPVLNLSCTDMSITE). The chain crosses the membrane as a helical span at residues 197-217 (LVDFILALVIFLFPLFITVLS). The Cytoplasmic segment spans residues 218-235 (YGCILATILCMPTGKQKA). A helical transmembrane segment spans residues 236–256 (FSTCASHLVVVTIFYSAIIFM). Topologically, residues 257 to 269 (YARPRVIHAFNMN) are extracellular. The helical transmembrane segment at 270–290 (KIISIFYAIVTPSLNPFIYCL) threads the bilayer. Residues 291-311 (RNREVKEALKKLAYCQASRSD) lie on the Cytoplasmic side of the membrane.

It belongs to the G-protein coupled receptor 1 family.

It is found in the cell membrane. Its function is as follows. Odorant receptor. This is Olfactory receptor 6B1 (OR6B1) from Homo sapiens (Human).